The chain runs to 72 residues: Translation initiation factor IF-1 (72 aa).

The region spanning Met-1–Lys-72 is the S1-like domain.

Belongs to the IF-1 family. In terms of assembly, component of the 30S ribosomal translation pre-initiation complex which assembles on the 30S ribosome in the order IF-2 and IF-3, IF-1 and N-formylmethionyl-tRNA(fMet); mRNA recruitment can occur at any time during PIC assembly.

It is found in the cytoplasm. One of the essential components for the initiation of protein synthesis. Stabilizes the binding of IF-2 and IF-3 on the 30S subunit to which N-formylmethionyl-tRNA(fMet) subsequently binds. Helps modulate mRNA selection, yielding the 30S pre-initiation complex (PIC). Upon addition of the 50S ribosomal subunit IF-1, IF-2 and IF-3 are released leaving the mature 70S translation initiation complex. The polypeptide is Translation initiation factor IF-1 (Chlorobaculum tepidum (strain ATCC 49652 / DSM 12025 / NBRC 103806 / TLS) (Chlorobium tepidum)).